A 209-amino-acid chain; its full sequence is ATP synthase subunit O, mitochondrial (209 aa).

It belongs to the ATPase delta chain family. F-type ATPases have 2 components, CF(1) - the catalytic core - and CF(0) - the membrane proton channel. CF(1) has five subunits: alpha(3), beta(3), gamma(1), delta(1), epsilon(1). CF(0) has three main subunits: a, b and c.

The protein resides in the mitochondrion. The protein localises to the mitochondrion inner membrane. Mitochondrial membrane ATP synthase (F(1)F(0) ATP synthase or Complex V) produces ATP from ADP in the presence of a proton gradient across the membrane which is generated by electron transport complexes of the respiratory chain. F-type ATPases consist of two structural domains, F(1) - containing the extramembraneous catalytic core and F(0) - containing the membrane proton channel, linked together by a central stalk and a peripheral stalk. During catalysis, ATP synthesis in the catalytic domain of F(1) is coupled via a rotary mechanism of the central stalk subunits to proton translocation. Part of the complex F(0) domain and the peripheric stalk, which acts as a stator to hold the catalytic alpha(3)beta(3) subcomplex and subunit a/ATP6 static relative to the rotary elements. This chain is ATP synthase subunit O, mitochondrial, found in Drosophila melanogaster (Fruit fly).